A 511-amino-acid polypeptide reads, in one-letter code: MKKRALVSVSNKTGVVEFVKGLLEQGIEVISTGGTKKLLEENGLQVMGISEVTGFPEIMDGRVKTLHPNIHGGLLAVRDNEAHVAEMSELGIQLIDFVVVNLYPFKETIAKPDVTFADAIENIDIGGPTMIRSAAKNHKFVSVIVDPADYDVVLAELKEKGEVTDETKRKLAAKVFRHTAAYDALISNYLTEQMGEESPEILTVTFEKKQDLRYGENPHQKATFYKAPFAVASSVAYAEQLHGKELSYNNINDADAALSIVKEFTEPAVVAVKHMNPCGVGVGTDIHEAYTRAYEADPVSIFGGIIAANREIDKRVAEKLHEIFLEIIIAPSFSKEALEVLQSKKNLRLLTVNIEKTTSASKKLTSVQGGLLVQEEDTLALNEETIIIPTKREPTEQEWNDLKLAWKVVKHVKSNAIVLAKDNMTIGVGAGQMNRVGSAKIAISQAGSKAQGSALASDAFFPMPDTVEEAAKAGITAIIQPGGSIRDEDSIKKADEYGITMVFTGVRHFKH.

The region spanning 1 to 145 is the MGS-like domain; the sequence is MKKRALVSVS…KNHKFVSVIV (145 aa).

The protein belongs to the PurH family.

It carries out the reaction (6R)-10-formyltetrahydrofolate + 5-amino-1-(5-phospho-beta-D-ribosyl)imidazole-4-carboxamide = 5-formamido-1-(5-phospho-D-ribosyl)imidazole-4-carboxamide + (6S)-5,6,7,8-tetrahydrofolate. It catalyses the reaction IMP + H2O = 5-formamido-1-(5-phospho-D-ribosyl)imidazole-4-carboxamide. Its pathway is purine metabolism; IMP biosynthesis via de novo pathway; 5-formamido-1-(5-phospho-D-ribosyl)imidazole-4-carboxamide from 5-amino-1-(5-phospho-D-ribosyl)imidazole-4-carboxamide (10-formyl THF route): step 1/1. The protein operates within purine metabolism; IMP biosynthesis via de novo pathway; IMP from 5-formamido-1-(5-phospho-D-ribosyl)imidazole-4-carboxamide: step 1/1. This is Bifunctional purine biosynthesis protein PurH from Bacillus cytotoxicus (strain DSM 22905 / CIP 110041 / 391-98 / NVH 391-98).